Consider the following 59-residue polypeptide: U-actitoxin-Aer2b (59 aa).

Contains 5 disulfide bonds.

Its subcellular location is the secreted. The protein resides in the nematocyst. The polypeptide is U-actitoxin-Aer2b (Anemonia erythraea (Sea anemone)).